A 439-amino-acid chain; its full sequence is tRNA(Ile)-lysidine synthase (439 aa).

23–28 (SGGLDS) is an ATP binding site.

Belongs to the tRNA(Ile)-lysidine synthase family.

It localises to the cytoplasm. The catalysed reaction is cytidine(34) in tRNA(Ile2) + L-lysine + ATP = lysidine(34) in tRNA(Ile2) + AMP + diphosphate + H(+). Functionally, ligates lysine onto the cytidine present at position 34 of the AUA codon-specific tRNA(Ile) that contains the anticodon CAU, in an ATP-dependent manner. Cytidine is converted to lysidine, thus changing the amino acid specificity of the tRNA from methionine to isoleucine. This chain is tRNA(Ile)-lysidine synthase, found in Methylococcus capsulatus (strain ATCC 33009 / NCIMB 11132 / Bath).